Here is a 432-residue protein sequence, read N- to C-terminus: Enolase (432 aa).

(2R)-2-phosphoglycerate is bound at residue Q164. E206 (proton donor) is an active-site residue. The Mg(2+) site is built by D243, E289, and D316. (2R)-2-phosphoglycerate is bound by residues K341, R370, S371, and K392. The active-site Proton acceptor is K341.

Belongs to the enolase family. Mg(2+) is required as a cofactor.

The protein localises to the cytoplasm. It is found in the secreted. The protein resides in the cell surface. It catalyses the reaction (2R)-2-phosphoglycerate = phosphoenolpyruvate + H2O. Its pathway is carbohydrate degradation; glycolysis; pyruvate from D-glyceraldehyde 3-phosphate: step 4/5. Functionally, catalyzes the reversible conversion of 2-phosphoglycerate (2-PG) into phosphoenolpyruvate (PEP). It is essential for the degradation of carbohydrates via glycolysis. The polypeptide is Enolase (Borrelia duttonii (strain Ly)).